We begin with the raw amino-acid sequence, 230 residues long: Orotidine 5'-phosphate decarboxylase (230 aa).

Substrate-binding positions include Asp-11, Lys-34, 61-70 (DLKLHDIPNT), Thr-117, Arg-179, Gln-188, Gly-208, and Arg-209. Lys-63 acts as the Proton donor in catalysis.

This sequence belongs to the OMP decarboxylase family. Type 1 subfamily. In terms of assembly, homodimer.

It carries out the reaction orotidine 5'-phosphate + H(+) = UMP + CO2. The protein operates within pyrimidine metabolism; UMP biosynthesis via de novo pathway; UMP from orotate: step 2/2. Functionally, catalyzes the decarboxylation of orotidine 5'-monophosphate (OMP) to uridine 5'-monophosphate (UMP). This chain is Orotidine 5'-phosphate decarboxylase, found in Streptococcus pyogenes serotype M6 (strain ATCC BAA-946 / MGAS10394).